The following is a 172-amino-acid chain: 3-hydroxydecanoyl-[acyl-carrier-protein] dehydratase (172 aa).

H71 is an active-site residue.

The protein belongs to the thioester dehydratase family. FabA subfamily. As to quaternary structure, homodimer.

Its subcellular location is the cytoplasm. It catalyses the reaction a (3R)-hydroxyacyl-[ACP] = a (2E)-enoyl-[ACP] + H2O. The catalysed reaction is (3R)-hydroxydecanoyl-[ACP] = (2E)-decenoyl-[ACP] + H2O. It carries out the reaction (2E)-decenoyl-[ACP] = (3Z)-decenoyl-[ACP]. It participates in lipid metabolism; fatty acid biosynthesis. Necessary for the introduction of cis unsaturation into fatty acids. Catalyzes the dehydration of (3R)-3-hydroxydecanoyl-ACP to E-(2)-decenoyl-ACP and then its isomerization to Z-(3)-decenoyl-ACP. Can catalyze the dehydratase reaction for beta-hydroxyacyl-ACPs with saturated chain lengths up to 16:0, being most active on intermediate chain length. The protein is 3-hydroxydecanoyl-[acyl-carrier-protein] dehydratase of Cronobacter sakazakii (strain ATCC BAA-894) (Enterobacter sakazakii).